A 427-amino-acid chain; its full sequence is 3-phosphoshikimate 1-carboxyvinyltransferase (427 aa).

3-phosphoshikimate-binding residues include K22, S23, and R27. K22 contacts phosphoenolpyruvate. Phosphoenolpyruvate is bound by residues G96 and R124. S169, S170, Q171, S197, D313, N336, and K340 together coordinate 3-phosphoshikimate. Position 171 (Q171) interacts with phosphoenolpyruvate. Residue D313 is the Proton acceptor of the active site. Positions 344, 386, and 411 each coordinate phosphoenolpyruvate.

This sequence belongs to the EPSP synthase family. In terms of assembly, monomer.

The protein localises to the cytoplasm. The catalysed reaction is 3-phosphoshikimate + phosphoenolpyruvate = 5-O-(1-carboxyvinyl)-3-phosphoshikimate + phosphate. It functions in the pathway metabolic intermediate biosynthesis; chorismate biosynthesis; chorismate from D-erythrose 4-phosphate and phosphoenolpyruvate: step 6/7. Catalyzes the transfer of the enolpyruvyl moiety of phosphoenolpyruvate (PEP) to the 5-hydroxyl of shikimate-3-phosphate (S3P) to produce enolpyruvyl shikimate-3-phosphate and inorganic phosphate. The protein is 3-phosphoshikimate 1-carboxyvinyltransferase of Escherichia coli O1:K1 / APEC.